The chain runs to 88 residues: Conotoxin Gm9.1 (88 aa).

The first 27 residues, 1-27, serve as a signal peptide directing secretion; the sequence is MHLSLARSAVLMLLLLFALGNFVVVQS. A propeptide spanning residues 28-58 is cleaved from the precursor; it reads GLITRDVDNGQLTDNRRNLQTEWNPLSLFMS. Intrachain disulfides connect Cys-62–Cys-76, Cys-66–Cys-78, and Cys-72–Cys-83. Asparagine amide is present on Asn-87.

The protein belongs to the conotoxin P superfamily. As to expression, expressed by the venom duct.

It localises to the secreted. Its function is as follows. Neurotoxin. In vivo, elicits 'spasmodic' symptomatology. The polypeptide is Conotoxin Gm9.1 (Conus gloriamaris (Glory-of-the-Sea cone)).